We begin with the raw amino-acid sequence, 301 residues long: Acetylglutamate kinase (301 aa).

Residues 72–73 (GG), arginine 94, and asparagine 199 contribute to the substrate site.

The protein belongs to the acetylglutamate kinase family. ArgB subfamily.

The protein resides in the cytoplasm. It catalyses the reaction N-acetyl-L-glutamate + ATP = N-acetyl-L-glutamyl 5-phosphate + ADP. The protein operates within amino-acid biosynthesis; L-arginine biosynthesis; N(2)-acetyl-L-ornithine from L-glutamate: step 2/4. Catalyzes the ATP-dependent phosphorylation of N-acetyl-L-glutamate. The sequence is that of Acetylglutamate kinase from Bartonella bacilliformis (strain ATCC 35685 / KC583 / Herrer 020/F12,63).